The primary structure comprises 309 residues: Verprolin (309 aa).

The span at 1 to 13 (MAPAPPPPPPAPA) shows a compositional bias: pro residues. The disordered stretch occupies residues 1-273 (MAPAPPPPPP…PNRVDDHGRF (273 aa)). The WH2 domain occupies 27 to 44 (DRSALLNSIQKGKKLKKA). Positions 82–91 (LPTSSNNTQQ) are enriched in polar residues. Positions 141–207 (TSAPPRPSIP…PPKVPPPPLS (67 aa)) are enriched in pro residues.

It belongs to the verprolin family. In terms of assembly, interacts with wsp1. Interacts with myo1 (via SH3 domain). Interacts with actin monomers.

It is found in the cytoplasm. The protein localises to the cytoskeleton. Involved in cytoskeletal organization and cellular growth. May exert its effects on the cytoskeleton directly, or indirectly via proline-binding proteins such as profilin or proteins possessing SH3 domains. Plays a role in actin patch assembly by enhancing the ability of myo1 to stimulate actin polymerization by the Arp2/3 complex. This is Verprolin from Schizosaccharomyces pombe (strain 972 / ATCC 24843) (Fission yeast).